A 39-amino-acid polypeptide reads, in one-letter code: Omega-theraphotoxin-Bs1b (39 aa).

3 cysteine pairs are disulfide-bonded: Cys4–Cys25, Cys8–Cys31, and Cys17–Cys36.

It belongs to the neurotoxin 12 (Hwtx-2) family. 06 (TXP1) subfamily. In terms of tissue distribution, expressed by the venom gland.

It localises to the secreted. Inhibits voltage-gated calcium channels (Cav) in rat cerebellar granule cells. Has insecticidal activity. This Brachypelma smithi (Mexican red knee tarantula) protein is Omega-theraphotoxin-Bs1b.